The sequence spans 544 residues: Methyl-accepting chemotaxis protein McpP (544 aa).

A run of 3 helical transmembrane segments spans residues 12-32 (RLWL…LLML), 50-70 (VVQT…AGTL), and 192-212 (DASL…MLIA). The 55-residue stretch at 213–267 (RSIARPLQEAVQAMGNIASGESDLTRRLDTHGSDEITHLGEHFNRFNGKLQGVVG) folds into the HAMP domain. The Methyl-accepting transducer domain maps to 272–508 (AAHALAQSAG…EINRNVLDTA (237 aa)).

The protein belongs to the methyl-accepting chemotaxis (MCP) protein family.

The protein localises to the cell membrane. Functionally, chemotactic-signal transducers respond to changes in the concentration of attractants and repellents in the environment, transduce a signal from the outside to the inside of the cell, and facilitate sensory adaptation through the variation of the level of methylation. McpP is a chemoreceptor that responds specifically to some C2 and C3 carboxylic acids. Recognizes acetate, pyruvate, propionate, and L-lactate. The protein is Methyl-accepting chemotaxis protein McpP of Pseudomonas putida (strain ATCC 47054 / DSM 6125 / CFBP 8728 / NCIMB 11950 / KT2440).